We begin with the raw amino-acid sequence, 152 residues long: Protein D1 (152 aa).

The protein belongs to the phosphatidylethanolamine-binding protein family.

The chain is Protein D1 (D1) from Onchocerca volvulus.